The chain runs to 110 residues: MTSLLTFCAAALMEIAGCFAFWAWLRLDKSPLWLIPGMLALALFAYLLTLADSPLAGRAYAAYGGIYIASALLWGWAIEGNRPDQWDVIGAAICLVGMSVILFGPRTLPA.

The next 4 membrane-spanning stretches (helical) occupy residues 4-24 (LLTF…FWAW), 31-51 (PLWL…LTLA), 59-79 (AYAA…WAIE), and 85-105 (QWDV…LFGP).

Belongs to the UPF0060 family.

The protein resides in the cell inner membrane. This is UPF0060 membrane protein RPA3838 from Rhodopseudomonas palustris (strain ATCC BAA-98 / CGA009).